Reading from the N-terminus, the 878-residue chain is DNA gyrase subunit A (878 aa).

The 500-residue stretch at 34–533 (LPDVRDGLKP…NSADINIEDL (500 aa)) folds into the Topo IIA-type catalytic domain. The active-site O-(5'-phospho-DNA)-tyrosine intermediate is Tyr-122. The GyrA-box motif lies at 560-566 (QRRGGKG). Positions 844-878 (DDEELDAIDGSVAEGDEDIAPEAESDDDVADDADE) are disordered. Over residues 857–878 (EGDEDIAPEAESDDDVADDADE) the composition is skewed to acidic residues.

This sequence belongs to the type II topoisomerase GyrA/ParC subunit family. In terms of assembly, heterotetramer, composed of two GyrA and two GyrB chains. In the heterotetramer, GyrA contains the active site tyrosine that forms a transient covalent intermediate with DNA, while GyrB binds cofactors and catalyzes ATP hydrolysis.

It localises to the cytoplasm. It catalyses the reaction ATP-dependent breakage, passage and rejoining of double-stranded DNA.. In terms of biological role, a type II topoisomerase that negatively supercoils closed circular double-stranded (ds) DNA in an ATP-dependent manner to modulate DNA topology and maintain chromosomes in an underwound state, and also catalyzes the interconversion of other topological isomers of double-stranded DNA rings, including catenanes and knotted rings. Replenishes negative supercoiling downstream of highly transcribed genes to help control overall chromosomal supercoiling density. E.coli makes 15% more negative supercoils in pBR322 plasmid DNA than S.typhimurium; the S.typhimurium GyrB subunit is toxic in E.coli, while the E.coli copy can be expressed in S.typhimurium even though the 2 subunits have 777/804 residues identical. Its function is as follows. Negative supercoiling favors strand separation, and DNA replication, transcription, recombination and repair, all of which involve strand separation. Type II topoisomerases break and join 2 DNA strands simultaneously in an ATP-dependent manner. In Salmonella typhimurium (strain LT2 / SGSC1412 / ATCC 700720), this protein is DNA gyrase subunit A.